The sequence spans 290 residues: Putative heme oxygenase 3 (290 aa).

Residues 1–12 show a composition bias toward acidic residues; the sequence is MSSEVETAEAVD. The tract at residues 1–33 is disordered; it reads MSSEVETAEAVDESEKNSMASEKENHSKIADFS. Residues 13–33 show a composition bias toward basic and acidic residues; it reads ESEKNSMASEKENHSKIADFS. HRM repeat units lie at residues 238–243 and 255–260; these read KCPFNA and NCPFQM.

Belongs to the heme oxygenase family. As to expression, found in the spleen, liver, thymus, prostate, heart, kidney, brain and testis.

The catalysed reaction is heme b + 3 reduced [NADPH--hemoprotein reductase] + 3 O2 = biliverdin IXalpha + CO + Fe(2+) + 3 oxidized [NADPH--hemoprotein reductase] + 3 H2O + H(+). Heme oxygenase cleaves the heme ring at the alpha methene bridge to form biliverdin. Biliverdin is subsequently converted to bilirubin by biliverdin reductase. Heme oxygenase 3 could be implicated in some heme-dependent regulatory role in the cell. The chain is Putative heme oxygenase 3 (Hmox3) from Rattus norvegicus (Rat).